We begin with the raw amino-acid sequence, 404 residues long: S-adenosylmethionine synthase (404 aa).

Histidine 16 is an ATP binding site. A Mg(2+)-binding site is contributed by aspartate 18. Position 44 (glutamate 44) interacts with K(+). L-methionine-binding residues include glutamate 57 and glutamine 100. The interval 100 to 110 (QSPEINQGVAR) is flexible loop. ATP-binding positions include 177–179 (DGK), aspartate 257, 263–264 (RK), alanine 280, and lysine 284. Aspartate 257 contacts L-methionine. Lysine 288 contributes to the L-methionine binding site.

Belongs to the AdoMet synthase family. In terms of assembly, homotetramer; dimer of dimers. Mg(2+) is required as a cofactor. Requires K(+) as cofactor.

It localises to the cytoplasm. The enzyme catalyses L-methionine + ATP + H2O = S-adenosyl-L-methionine + phosphate + diphosphate. Its pathway is amino-acid biosynthesis; S-adenosyl-L-methionine biosynthesis; S-adenosyl-L-methionine from L-methionine: step 1/1. Catalyzes the formation of S-adenosylmethionine (AdoMet) from methionine and ATP. The overall synthetic reaction is composed of two sequential steps, AdoMet formation and the subsequent tripolyphosphate hydrolysis which occurs prior to release of AdoMet from the enzyme. The chain is S-adenosylmethionine synthase from Bifidobacterium adolescentis (strain ATCC 15703 / DSM 20083 / NCTC 11814 / E194a).